Reading from the N-terminus, the 448-residue chain is Trigger factor (448 aa).

The 86-residue stretch at 172-257 folds into the PPIase FKBP-type domain; sequence GDRVTVDFVG…MKKIEWPHLP (86 aa).

It belongs to the FKBP-type PPIase family. Tig subfamily.

It localises to the cytoplasm. It carries out the reaction [protein]-peptidylproline (omega=180) = [protein]-peptidylproline (omega=0). Its function is as follows. Involved in protein export. Acts as a chaperone by maintaining the newly synthesized protein in an open conformation. Functions as a peptidyl-prolyl cis-trans isomerase. This Paraburkholderia xenovorans (strain LB400) protein is Trigger factor.